The chain runs to 379 residues: Actin, cytoplasmic (379 aa).

Belongs to the actin family.

It localises to the cytoplasm. It is found in the cytoskeleton. The catalysed reaction is ATP + H2O = ADP + phosphate + H(+). In terms of biological role, actins are highly conserved proteins that are involved in various types of cell motility and are ubiquitously expressed in all eukaryotic cells. The polypeptide is Actin, cytoplasmic (Euplotes crassus).